Here is a 198-residue protein sequence, read N- to C-terminus: Myc target protein 1 homolog (198 aa).

The short motif at 52 to 72 is the Bipartite nuclear localization signal element; that stretch reads RRRASASISPRMPKSSSRRPR. 2 disordered regions span residues 58–83 and 172–198; these read SISP…LNRS and NNSL…FPDS. The segment covering 172-181 has biased composition (polar residues); sequence NNSLRLGPST.

Belongs to the MYCT1 family.

Its subcellular location is the nucleus. Its function is as follows. May regulate certain MYC target genes, MYC seems to be a direct upstream transcriptional activator. The protein is Myc target protein 1 homolog (myct1) of Xenopus tropicalis (Western clawed frog).